The primary structure comprises 139 residues: Aspartate 1-decarboxylase (139 aa).

Ser25 serves as the catalytic Schiff-base intermediate with substrate; via pyruvic acid. Pyruvic acid (Ser) is present on Ser25. A substrate-binding site is contributed by Thr57. Tyr58 (proton donor) is an active-site residue. Substrate is bound at residue 73–75; it reads GAA.

It belongs to the PanD family. As to quaternary structure, heterooctamer of four alpha and four beta subunits. The cofactor is pyruvate. In terms of processing, is synthesized initially as an inactive proenzyme, which is activated by self-cleavage at a specific serine bond to produce a beta-subunit with a hydroxyl group at its C-terminus and an alpha-subunit with a pyruvoyl group at its N-terminus.

The protein localises to the cytoplasm. It catalyses the reaction L-aspartate + H(+) = beta-alanine + CO2. It functions in the pathway cofactor biosynthesis; (R)-pantothenate biosynthesis; beta-alanine from L-aspartate: step 1/1. Catalyzes the pyruvoyl-dependent decarboxylation of aspartate to produce beta-alanine. The protein is Aspartate 1-decarboxylase of Mycobacterium bovis (strain BCG / Tokyo 172 / ATCC 35737 / TMC 1019).